A 682-amino-acid chain; its full sequence is Actin-binding LIM protein 3 (682 aa).

Position 1 is an N-acetylmethionine (Met-1). 4 LIM zinc-binding domains span residues 21-80 (IQCY…LYGT), 80-140 (TRCD…MTSS), 149-208 (SHCA…QFGI), and 208-268 (IKCE…ARAE). Phosphoserine occurs at positions 277, 280, 282, 286, 290, 337, 372, and 373. Disordered regions lie at residues 372 to 426 (SSPG…SYQA) and 440 to 475 (YRKPPIYKRHGDLSTATKSKTSEDISQASKYSPAYS). Tyr-376 is modified (phosphotyrosine). Phosphoserine occurs at positions 379 and 388. 3 stretches are compositionally biased toward polar residues: residues 380 to 393 (PTYSRQGMSPTFSR), 405 to 425 (GRSSPYHSQLDVRSSTPTSYQ), and 453 to 466 (STATKSKTSEDISQ). A phosphoserine mark is found at Ser-492, Ser-502, and Ser-503. Thr-542 is subject to Phosphothreonine. A phosphoserine mark is found at Ser-566, Ser-575, and Ser-606. The HP domain maps to 614-682 (MREYKIYPYE…NELKKQARLF (69 aa)). Residue Arg-630 is modified to Omega-N-methylarginine.

In terms of assembly, directly interacts with F-actin and ABRA. In terms of tissue distribution, expressed in heart, brain, lung and liver. In the brain, highly expressed in the olfactory bulb. In the hippocampus, expressed selectively in the CA2 and CA3 fields. In the cerebellum, expressed in internal granular cells.

It is found in the cytoplasm. Its function is as follows. May act as scaffold protein. May stimulate ABRA activity and ABRA-dependent SRF transcriptional activity. In Mus musculus (Mouse), this protein is Actin-binding LIM protein 3 (Ablim3).